Reading from the N-terminus, the 331-residue chain is Glyceraldehyde-3-phosphate dehydrogenase (331 aa).

NAD(+) contacts are provided by residues R11–I12, D33, and R78. D-glyceraldehyde 3-phosphate-binding positions include S148 to T150, T179, T208 to G209, and R231. Residue C149 is the Nucleophile of the active site. Residue N313 participates in NAD(+) binding.

It belongs to the glyceraldehyde-3-phosphate dehydrogenase family. Homotetramer.

Its subcellular location is the cytoplasm. The catalysed reaction is D-glyceraldehyde 3-phosphate + phosphate + NAD(+) = (2R)-3-phospho-glyceroyl phosphate + NADH + H(+). Its pathway is carbohydrate degradation; glycolysis; pyruvate from D-glyceraldehyde 3-phosphate: step 1/5. This Eremothecium gossypii (strain ATCC 10895 / CBS 109.51 / FGSC 9923 / NRRL Y-1056) (Yeast) protein is Glyceraldehyde-3-phosphate dehydrogenase (GPD).